Here is a 122-residue protein sequence, read N- to C-terminus: Holo-[acyl-carrier-protein] synthase (122 aa).

The Mg(2+) site is built by D8 and E58.

It belongs to the P-Pant transferase superfamily. AcpS family. Requires Mg(2+) as cofactor.

The protein resides in the cytoplasm. It carries out the reaction apo-[ACP] + CoA = holo-[ACP] + adenosine 3',5'-bisphosphate + H(+). Transfers the 4'-phosphopantetheine moiety from coenzyme A to a Ser of acyl-carrier-protein. The protein is Holo-[acyl-carrier-protein] synthase of Levilactobacillus brevis (strain ATCC 367 / BCRC 12310 / CIP 105137 / JCM 1170 / LMG 11437 / NCIMB 947 / NCTC 947) (Lactobacillus brevis).